The sequence spans 343 residues: Dihydroorotate dehydrogenase (quinone) (343 aa).

FMN contacts are provided by residues 61 to 65 and Thr-85; that span reads AGLDK. Lys-65 contributes to the substrate binding site. 110-114 lines the substrate pocket; the sequence is NRMGF. FMN contacts are provided by Asn-138 and Asn-171. Asn-171 lines the substrate pocket. The Nucleophile role is filled by Ser-174. Residue Asn-176 coordinates substrate. FMN contacts are provided by Lys-216 and Thr-244. 245–246 is a binding site for substrate; the sequence is NT. FMN-binding positions include Gly-267, Gly-296, and 317-318; that span reads YS.

It belongs to the dihydroorotate dehydrogenase family. Type 2 subfamily. As to quaternary structure, monomer. Requires FMN as cofactor.

It localises to the cell membrane. The catalysed reaction is (S)-dihydroorotate + a quinone = orotate + a quinol. It participates in pyrimidine metabolism; UMP biosynthesis via de novo pathway; orotate from (S)-dihydroorotate (quinone route): step 1/1. Its function is as follows. Catalyzes the conversion of dihydroorotate to orotate with quinone as electron acceptor. This is Dihydroorotate dehydrogenase (quinone) from Stutzerimonas stutzeri (strain A1501) (Pseudomonas stutzeri).